The chain runs to 104 residues: DNA-directed RNA polymerase subunit omega (104 aa).

It belongs to the RNA polymerase subunit omega family. The RNAP catalytic core consists of 2 alpha, 1 beta, 1 beta' and 1 omega subunit. When a sigma factor is associated with the core the holoenzyme is formed, which can initiate transcription.

The catalysed reaction is RNA(n) + a ribonucleoside 5'-triphosphate = RNA(n+1) + diphosphate. In terms of biological role, promotes RNA polymerase assembly. Latches the N- and C-terminal regions of the beta' subunit thereby facilitating its interaction with the beta and alpha subunits. The protein is DNA-directed RNA polymerase subunit omega of Streptococcus agalactiae serotype Ia (strain ATCC 27591 / A909 / CDC SS700).